Here is a 90-residue protein sequence, read N- to C-terminus: Large ribosomal subunit protein bL31B-1 (90 aa).

This sequence belongs to the bacterial ribosomal protein bL31 family. Type B subfamily. As to quaternary structure, part of the 50S ribosomal subunit.

The protein is Large ribosomal subunit protein bL31B-1 of Streptomyces coelicolor (strain ATCC BAA-471 / A3(2) / M145).